A 206-amino-acid polypeptide reads, in one-letter code: Large ribosomal subunit protein uL3 (206 aa).

The segment at 127 to 151 is disordered; the sequence is SGGPSSHGSKFHRHLGGTGQATTPA.

This sequence belongs to the universal ribosomal protein uL3 family. As to quaternary structure, part of the 50S ribosomal subunit. Forms a cluster with proteins L14 and L19.

Functionally, one of the primary rRNA binding proteins, it binds directly near the 3'-end of the 23S rRNA, where it nucleates assembly of the 50S subunit. This chain is Large ribosomal subunit protein uL3, found in Borreliella burgdorferi (strain ZS7) (Borrelia burgdorferi).